The following is an 873-amino-acid chain: F-BAR domain only protein 1 (873 aa).

In terms of domain architecture, F-BAR spans 1–248; that stretch reads MSYFGEHFWG…NVENVTVDML (248 aa). Residues 1 to 275 form a mediates membrane-binding region; the sequence is MSYFGEHFWG…LDFDAYSSAA (275 aa). The segment at 153–172 is disordered; it reads RENTSQKEMDKAETKSKKAA. The stretch at 155 to 178 forms a coiled coil; sequence NTSQKEMDKAETKSKKAADSLRRS. The segment at 267–439 is mediates interaction with the adaptor protein complex AP-2; the sequence is DFDAYSSAAL…KSLFGPPLES (173 aa). Residues Ser295, Ser343, and Ser368 each carry the phosphoserine modification. The tract at residues 302–347 is disordered; sequence SVDFLESDSGVPPEVDDEGFTVRPDISQNNGAEPPRFSSSDSDFDD. Disordered stretches follow at residues 381-600 and 813-833; these read GSLI…RGPS and SGHL…SPVA. The span at 447–466 shows a compositional bias: low complexity; it reads TGSSSLGFTSSPSPFSSSSP. Ser518 is modified (phosphoserine). A compositionally biased stretch (low complexity) spans 567-576; the sequence is SLSPSPLGSS. The tract at residues 593-873 is mediates interaction with AGFG1, CALM, DAB2, EPS15, EPS15R, ITSN1 and clathrin; the sequence is HGISRGPSPV…FATGMYLVSC (281 aa). Ser600 bears the Phosphoserine mark. In terms of domain architecture, MHD spans 609-872; sequence ALPVATAFTE…RFATGMYLVS (264 aa). Residues 816-827 are compositionally biased toward polar residues; the sequence is LSASWQPQSGPS.

It belongs to the FCHO family. May oligomerize and form homotetramer. Interacts with AP2A2 and AP2B1; 2 subunits of the adaptor protein complex AP-2. Interacts with DAB2. Interacts with clathrin (CLTC or CLTCL1). Interacts with EPS15, EPS15R and ITSN1. Interacts with AGFG1 and CALM. May interact with ACVR1; linking this receptor to clathrin-mediated endocytosis. In terms of tissue distribution, mainly detected in brain and spleen.

Its subcellular location is the membrane. It localises to the clathrin-coated pit. Functionally, functions in an early step of clathrin-mediated endocytosis. Has both a membrane binding/bending activity and the ability to recruit proteins essential to the formation of functional clathrin-coated pits. May regulate Bmp signaling by regulating clathrin-mediated endocytosis of Bmp receptors. Involved in the regulation of T-cell poliferation and activation. Affects TCR clustering upon receptor triggering and modulates its internalisation, playing a role in TCR-dependent T-cell activation. The polypeptide is F-BAR domain only protein 1 (Mus musculus (Mouse)).